A 218-amino-acid chain; its full sequence is Adenylate kinase (218 aa).

10–15 (GAGKGT) is an ATP binding site. Positions 30-59 (STGDMLRAAVKAGTPLGQQAKAVMDAGQLV) are NMP. Residues threonine 31, arginine 36, 57 to 59 (QLV), 85 to 88 (GFPR), and glutamine 92 each bind AMP. Residues 122–159 (GRRSHPASGRTYHVKFNPPKVEGQDDVTGEPLVQREDD) are LID. Residues arginine 123 and 132-133 (TY) each bind ATP. The disordered stretch occupies residues 127–151 (PASGRTYHVKFNPPKVEGQDDVTGE). The AMP site is built by arginine 156 and arginine 167. Glycine 203 contributes to the ATP binding site.

It belongs to the adenylate kinase family. Monomer.

It is found in the cytoplasm. It catalyses the reaction AMP + ATP = 2 ADP. Its pathway is purine metabolism; AMP biosynthesis via salvage pathway; AMP from ADP: step 1/1. Functionally, catalyzes the reversible transfer of the terminal phosphate group between ATP and AMP. Plays an important role in cellular energy homeostasis and in adenine nucleotide metabolism. This is Adenylate kinase from Delftia acidovorans (strain DSM 14801 / SPH-1).